A 474-amino-acid chain; its full sequence is Glutathione synthetase (474 aa).

Residue Ala-2 is modified to N-acetylalanine. Substrate is bound at residue Arg-125. Residue Glu-144 coordinates ATP. Mg(2+)-binding residues include Glu-144 and Asn-146. Residues 148–151, 214–216, Gln-220, and 267–270 each bind substrate; these read VSAS, ERN, and RDGY. Residues Lys-305, 364-373, Tyr-375, and 398-401 contribute to the ATP site; these read KPQREGGGNN and MEKI. Glu-368 provides a ligand contact to Mg(2+). At Ser-415 the chain carries Phosphoserine. Residue Glu-425 participates in ATP binding. Arg-450 contributes to the substrate binding site. ATP contacts are provided by Lys-452 and Asp-458. Position 461-462 (461-462) interacts with substrate; sequence VA.

It belongs to the eukaryotic GSH synthase family. In terms of assembly, homodimer. Mg(2+) is required as a cofactor.

The catalysed reaction is gamma-L-glutamyl-L-cysteine + glycine + ATP = glutathione + ADP + phosphate + H(+). It carries out the reaction gamma-L-glutamyl-(2S)-2-aminobutanoate + glycine + ATP = ophthalmate + ADP + phosphate + H(+). The protein operates within sulfur metabolism; glutathione biosynthesis; glutathione from L-cysteine and L-glutamate: step 2/2. Its function is as follows. Catalyzes the production of glutathione from gamma-glutamylcysteine and glycine in an ATP-dependent manner. Glutathione (gamma-glutamylcysteinylglycine, GSH) is the most abundant intracellular thiol in living aerobic cells and is required for numerous processes including the protection of cells against oxidative damage, amino acid transport, the detoxification of foreign compounds, the maintenance of protein sulfhydryl groups in a reduced state and acts as a cofactor for a number of enzymes. Participates in ophthalmate biosynthesis in hepatocytes. This is Glutathione synthetase from Bos taurus (Bovine).